The following is a 225-amino-acid chain: Pyridoxine/pyridoxamine 5'-phosphate oxidase (225 aa).

Substrate-binding positions include Arg-21–Tyr-24 and Lys-79. FMN-binding positions include Arg-74–Lys-79, Tyr-89–Thr-90, Arg-95, and Lys-96. Residues Tyr-136, Arg-140, and Ser-144 each contribute to the substrate site. Residues Gln-153–Ser-154 and Trp-197 contribute to the FMN site. A substrate-binding site is contributed by Arg-203–His-205. Residue Arg-207 participates in FMN binding.

It belongs to the pyridoxamine 5'-phosphate oxidase family. In terms of assembly, homodimer. The cofactor is FMN.

The catalysed reaction is pyridoxamine 5'-phosphate + O2 + H2O = pyridoxal 5'-phosphate + H2O2 + NH4(+). It carries out the reaction pyridoxine 5'-phosphate + O2 = pyridoxal 5'-phosphate + H2O2. It functions in the pathway cofactor metabolism; pyridoxal 5'-phosphate salvage; pyridoxal 5'-phosphate from pyridoxamine 5'-phosphate: step 1/1. The protein operates within cofactor metabolism; pyridoxal 5'-phosphate salvage; pyridoxal 5'-phosphate from pyridoxine 5'-phosphate: step 1/1. In terms of biological role, catalyzes the oxidation of either pyridoxine 5'-phosphate (PNP) or pyridoxamine 5'-phosphate (PMP) into pyridoxal 5'-phosphate (PLP). In Paracidovorax citrulli (strain AAC00-1) (Acidovorax citrulli), this protein is Pyridoxine/pyridoxamine 5'-phosphate oxidase.